The sequence spans 339 residues: Deoxyhypusine hydroxylase (339 aa).

2 HEAT-like PBS-type repeats span residues leucine 71 to asparagine 97 and cysteine 104 to aspartate 130. Positions 73, 74, 106, and 107 each coordinate Fe cation. Residues glutamate 159 to serine 183 are disordered. HEAT-like PBS-type repeat units follow at residues glutamine 200–aspartate 233, phenylalanine 238–aspartate 264, and valine 271–aspartate 298. Residues histidine 240, glutamate 241, histidine 273, and glutamate 274 each coordinate Fe cation.

Belongs to the deoxyhypusine hydroxylase family. Fe(2+) serves as cofactor.

Its subcellular location is the cytoplasm. It is found in the nucleus. It catalyses the reaction [eIF5A protein]-deoxyhypusine + AH2 + O2 = [eIF5A protein]-hypusine + A + H2O. It participates in protein modification; eIF5A hypusination. Its function is as follows. Catalyzes the hydroxylation of the N(6)-(4-aminobutyl)-L-lysine intermediate to form hypusine, an essential post-translational modification only found in mature eIF-5A factor. The polypeptide is Deoxyhypusine hydroxylase (lia1) (Aspergillus oryzae (strain ATCC 42149 / RIB 40) (Yellow koji mold)).